A 164-amino-acid chain; its full sequence is Thiol peroxidase (164 aa).

In terms of domain architecture, Thioredoxin spans 16–162; the sequence is LQVGEIAHDF…YDAAIEAVKV (147 aa). The Cysteine sulfenic acid (-SOH) intermediate role is filled by C58. Cysteines 58 and 92 form a disulfide.

This sequence belongs to the peroxiredoxin family. Tpx subfamily. Homodimer.

The catalysed reaction is a hydroperoxide + [thioredoxin]-dithiol = an alcohol + [thioredoxin]-disulfide + H2O. Thiol-specific peroxidase that catalyzes the reduction of hydrogen peroxide and organic hydroperoxides to water and alcohols, respectively. Plays a role in cell protection against oxidative stress by detoxifying peroxides. This chain is Thiol peroxidase, found in Streptococcus parasanguinis.